A 205-amino-acid polypeptide reads, in one-letter code: MLCPSTFQPHLSPFMDFHWPVRSLWPETRPLFFQFEQEMMRHMQEMRHNMEFMERLHQRIFDEIDHVSPMTTFKPISFQLGKEGSHYALTLDTQDFSPEELAVKQVGRKLRVSGKTEKKQDDGKGSYSYRCQEFRQEFDLPEDVNPESVSCSLNNGQLQIQAPREGNTVSNERVIPITYTPAVKNPALQNSEPENQAVEAEAAEN.

The sHSP domain maps to Val67–Thr180. A disordered region spans residues Lys184–Asn205. Low complexity predominate over residues Glu192–Asn205.

Belongs to the small heat shock protein (HSP20) family. In terms of tissue distribution, expressed specifically in the rostral-most somites at 24 hpf. At 48 hpf, expression continues in the rostral-most somites and also in the notochord. Somite expression was restricted to the vicinity of the horizontal myoseptum. In adults, expressed in the heart.

In Danio rerio (Zebrafish), this protein is Heat shock protein beta-11 (hspb11).